Consider the following 303-residue polypeptide: Phosphoglycerate mutase 3 (303 aa).

Substrate-binding positions include Arg-13–Asn-20, Cys-26–Gly-27, Arg-70, Glu-120–Tyr-123, Lys-131, and Arg-147–Arg-148. Catalysis depends on His-14, which acts as the Tele-phosphohistidine intermediate. Residue Glu-120 is the Proton donor/acceptor of the active site. The disordered stretch occupies residues Asn-168–Pro-198. Residues Asp-177–Pro-198 show a composition bias toward basic and acidic residues. Residue Gly-236 to Ser-237 participates in substrate binding.

It belongs to the phosphoglycerate mutase family. BPG-dependent PGAM subfamily.

The catalysed reaction is (2R)-2-phosphoglycerate = (2R)-3-phosphoglycerate. It participates in carbohydrate degradation; glycolysis; pyruvate from D-glyceraldehyde 3-phosphate: step 3/5. Could be non-functional. This chain is Phosphoglycerate mutase 3 (GPM3), found in Saccharomyces cerevisiae (strain ATCC 204508 / S288c) (Baker's yeast).